The following is a 185-amino-acid chain: DNA replication complex GINS protein PSF2 (185 aa).

The protein belongs to the GINS2/PSF2 family. Component of the GINS complex which is a heterotetramer of gins1/psf1, gins2/psf2, gins3/psf3 and gins4/sld5. Component of the CMG helicase complex, composed of the mcm2-7 complex, the GINS complex and cdc45.

The protein localises to the nucleus. Its subcellular location is the chromosome. Functionally, required for correct functioning of the GINS complex, a complex that plays an essential role in the initiation of DNA replication, and progression of DNA replication forks. GINS complex is a core component of CDC45-MCM-GINS (CMG) helicase, the molecular machine that unwinds template DNA during replication, and around which the replisome is built. This chain is DNA replication complex GINS protein PSF2 (gins2), found in Xenopus laevis (African clawed frog).